We begin with the raw amino-acid sequence, 200 residues long: MVKIGICGPVGSGKTALIESLTRKMNEQYSLAVITNDIYTQEDAEFMSKNSVLPSERIIGVETGGCPHTAIREDASMNLEAVEEMQERFPDIEILFIESGGDNLSATFSPELADFTIFVIDVAQGDKIPRKGGPGIMRSDLLIINKIDLAPYVGANLSIMERDAKKMREDKPFLFTNIRAKEGIDAVVEWIKKYALLEDI.

8–15 (GPVGSGKT) serves as a coordination point for GTP.

Belongs to the SIMIBI class G3E GTPase family. UreG subfamily. Homodimer. UreH, UreF and UreG form a complex that acts as a GTP-hydrolysis-dependent molecular chaperone, activating the urease apoprotein by helping to assemble the nickel containing metallocenter of UreC. The UreE protein probably delivers the nickel.

The protein resides in the cytoplasm. In terms of biological role, facilitates the functional incorporation of the urease nickel metallocenter. This process requires GTP hydrolysis, probably effectuated by UreG. The protein is Urease accessory protein UreG of Helicobacter hepaticus (strain ATCC 51449 / 3B1).